The following is a 124-amino-acid chain: Ribonuclease pancreatic (124 aa).

Positions 1-13 (KESAAAKFERQHM) are enriched in basic and acidic residues. The disordered stretch occupies residues 1 to 23 (KESAAAKFERQHMDPSASSISSS). Substrate contacts are provided by Lys-7 and Arg-10. The active-site Proton acceptor is the His-12. Disulfide bonds link Cys-26–Cys-84, Cys-40–Cys-95, Cys-58–Cys-110, and Cys-65–Cys-72. An N-linked (GlcNAc...) asparagine glycan is attached at Asn-34. Residues 41–45 (KPVNT), Lys-66, and Arg-85 contribute to the substrate site. His-119 acts as the Proton donor in catalysis.

The protein belongs to the pancreatic ribonuclease family. In terms of assembly, monomer. Interacts with and forms tight 1:1 complexes with RNH1. Dimerization of two such complexes may occur. Interaction with RNH1 inhibits this protein. In terms of tissue distribution, pancreas.

It is found in the secreted. It carries out the reaction an [RNA] containing cytidine + H2O = an [RNA]-3'-cytidine-3'-phosphate + a 5'-hydroxy-ribonucleotide-3'-[RNA].. The enzyme catalyses an [RNA] containing uridine + H2O = an [RNA]-3'-uridine-3'-phosphate + a 5'-hydroxy-ribonucleotide-3'-[RNA].. Endonuclease that catalyzes the cleavage of RNA on the 3' side of pyrimidine nucleotides. Acts on single-stranded and double-stranded RNA. The polypeptide is Ribonuclease pancreatic (RNASE1) (Alces alces alces (European moose)).